The primary structure comprises 435 residues: Xylose isomerase (435 aa).

Catalysis depends on residues His-99 and Asp-102. The Mg(2+) site is built by Glu-230, Glu-266, His-269, Asp-294, Asp-305, Asp-307, and Asp-337.

This sequence belongs to the xylose isomerase family. Homotetramer. It depends on Mg(2+) as a cofactor.

The protein localises to the cytoplasm. The enzyme catalyses alpha-D-xylose = alpha-D-xylulofuranose. The protein is Xylose isomerase (xylA) of Tetragenococcus halophilus (Pediococcus halophilus).